The following is a 302-amino-acid chain: O-antigen biosynthesis glycosyltransferase WbnK (302 aa).

This sequence belongs to the glycosyltransferase 11 family.

The catalysed reaction is beta-D-Gal-(1-&gt;3)-alpha-D-GalNAc-(1-&gt;3)-alpha-D-GalNAc-di-trans,octa-cis-undecaprenyl diphosphate + GDP-beta-L-fucose = alpha-L-Fuc-(1-&gt;2)-beta-D-Gal-(1-&gt;3)-alpha-D-GalNAc-(1-&gt;3)-alpha-D-GalNAc-di-trans,octa-cis-undecaprenyl diphosphate + GDP + H(+). The protein operates within bacterial outer membrane biogenesis; LPS O-antigen biosynthesis. Its function is as follows. Involved in the assembly of the O-repeating unit during O-antigen biosynthesis. In Escherichia coli, this protein is O-antigen biosynthesis glycosyltransferase WbnK.